The following is a 214-amino-acid chain: Urease accessory protein UreE (214 aa).

Residues 163–214 form a disordered region; that stretch reads NAEPSGVDHSHEATDSGHGYGEDHDHDHSHDHNHDHDHNHDHDHSHSHDSHE. Basic and acidic residues predominate over residues 168–214; that stretch reads GVDHSHEATDSGHGYGEDHDHDHSHDHNHDHDHNHDHDHSHSHDSHE.

The protein belongs to the UreE family.

It localises to the cytoplasm. Involved in urease metallocenter assembly. Binds nickel. Probably functions as a nickel donor during metallocenter assembly. The sequence is that of Urease accessory protein UreE from Natronomonas pharaonis (strain ATCC 35678 / DSM 2160 / CIP 103997 / JCM 8858 / NBRC 14720 / NCIMB 2260 / Gabara) (Halobacterium pharaonis).